Consider the following 252-residue polypeptide: NAC domain-containing protein 83 (252 aa).

Residues 14-160 form the NAC domain; the sequence is LPPGFRFHPT…NWVLCRIFLK (147 aa). A DNA-binding region spans residues 110-166; the sequence is VGLKKTLVFYKGKPPHGSRTDWIMHEYRLSSSPPSSMGPTQNWVLCRIFLKKRAGNK. Disordered stretches follow at residues 165 to 194 and 217 to 252; these read NKNDDDDGDSRNLRHNNNNNSSDQIEIITT and LNLLPSSPSSDHASSGVTTEIFSSSDEETSSCNSFR. Low complexity-rich tracts occupy residues 180 to 194 and 219 to 252; these read NNNNNSSDQIEIITT and LLPSSPSSDHASSGVTTEIFSSSDEETSSCNSFR. The segment at 213-226 is PEST-like; the sequence is RTTDLNLLPSSPSS.

In terms of assembly, interacts with NAC007/VND4, NAC026/VND5 and NAC030/VND7. Interacts with the mungbean yellow mosaic virus (MYMV) AC1 replication-associated protein. Expressed in xylem and phloem cells in roots and inflorescence stems. Highly expressed in senescent leaves. Expressed in roots, and abscission and dehiscence tissues, such as axils of bracts and abscission zones in cauline leaves and siliques.

The protein resides in the nucleus. Transcriptional repressor that negatively regulates the expression of genes involved in xylem vessel formation. Represses the transcriptional activation activity of NAC030/VND7, which regulates protoxylem vessel differentiation by promoting immature xylem vessel-specific genes expression. Transcriptional activator that regulates the COLD-REGULATED (COR15A and COR15B) and RESPONSIVE TO DEHYDRATION (LTI78/RD29A and LTI65/RD29B) genes by binding directly to their promoters. Mediates signaling crosstalk between salt stress response and leaf aging process. May play a role in DNA replication of mungbean yellow mosaic virus. This Arabidopsis thaliana (Mouse-ear cress) protein is NAC domain-containing protein 83.